Reading from the N-terminus, the 426-residue chain is Dihydroorotase (426 aa).

Zn(2+) is bound by residues His62 and His64. Residues 64 to 66 (HLR) and Asn96 contribute to the substrate site. 3 residues coordinate Zn(2+): Asp154, His181, and His234. Substrate is bound at residue Asn280. Asp307 contacts Zn(2+). Asp307 is an active-site residue. Residues His311 and 325 to 326 (FG) contribute to the substrate site.

This sequence belongs to the metallo-dependent hydrolases superfamily. DHOase family. Class I DHOase subfamily. Zn(2+) is required as a cofactor.

The enzyme catalyses (S)-dihydroorotate + H2O = N-carbamoyl-L-aspartate + H(+). The protein operates within pyrimidine metabolism; UMP biosynthesis via de novo pathway; (S)-dihydroorotate from bicarbonate: step 3/3. Functionally, catalyzes the reversible cyclization of carbamoyl aspartate to dihydroorotate. In Desulforapulum autotrophicum (strain ATCC 43914 / DSM 3382 / VKM B-1955 / HRM2) (Desulfobacterium autotrophicum), this protein is Dihydroorotase.